A 335-amino-acid polypeptide reads, in one-letter code: Mycobacterial beta-ketoacyl-[acyl-carrier-protein] synthase III (335 aa).

Residues cysteine 122 and histidine 258 contribute to the active site. Positions 259-263 (QANSR) are ACP-binding. Asparagine 289 is a catalytic residue.

Belongs to the thiolase-like superfamily. FabH family. Homodimer.

The protein resides in the cytoplasm. It carries out the reaction malonyl-[ACP] + dodecanoyl-CoA + H(+) = 3-oxotetradecanoyl-[ACP] + CO2 + CoA. It participates in lipid metabolism; fatty acid biosynthesis. Its pathway is lipid metabolism; mycolic acid biosynthesis. Functionally, catalyzes the condensation reaction of fatty acid synthesis by the addition to an acyl acceptor of two carbons from malonyl-ACP. Catalyzes the first condensation reaction which initiates fatty acid synthesis and may therefore play a role in governing the total rate of fatty acid production. Possesses both acetoacetyl-ACP synthase and acetyl transacylase activities. Its substrate specificity determines the biosynthesis of branched-chain and/or straight-chain of fatty acids. The protein is Mycobacterial beta-ketoacyl-[acyl-carrier-protein] synthase III of Mycobacterium bovis (strain ATCC BAA-935 / AF2122/97).